A 172-amino-acid polypeptide reads, in one-letter code: RNA pyrophosphohydrolase (172 aa).

The Nudix hydrolase domain occupies G6–K149. A Nudix box motif is present at residues G38–G59.

It belongs to the Nudix hydrolase family. RppH subfamily. A divalent metal cation is required as a cofactor.

Functionally, accelerates the degradation of transcripts by removing pyrophosphate from the 5'-end of triphosphorylated RNA, leading to a more labile monophosphorylated state that can stimulate subsequent ribonuclease cleavage. The chain is RNA pyrophosphohydrolase from Shewanella denitrificans (strain OS217 / ATCC BAA-1090 / DSM 15013).